We begin with the raw amino-acid sequence, 99 residues long: CLAVATA3/ESR (CLE)-related protein 17 (99 aa).

Residues 1–21 form the signal peptide; sequence MTHVLVRRQGQGKKRRWDVNM. Residues 77 to 89 are compositionally biased toward basic and acidic residues; the sequence is LSRDDIYGDDKRV. The disordered stretch occupies residues 77-99; it reads LSRDDIYGDDKRVVHTGPNPLHN. At Pro-94 the chain carries Hydroxyproline. Pro-94 carries an O-linked (Ara...) hydroxyproline glycan.

It belongs to the CLV3/ESR signal peptide family. Post-translationally, the O-glycosylation (arabinosylation) of the hydroxyproline Pro-94 enhances binding affinity of the CLE17p peptide for its receptor. In terms of tissue distribution, mostly expressed in seedlings, roots, flowers, stems and apex, and, to a lower extent, in leaves and siliques.

The protein localises to the secreted. The protein resides in the extracellular space. Functionally, extracellular signal peptide that regulates cell fate. Represses root apical meristem maintenance. Regulates the transition of protophloem cells from proliferation to differentiation, thus impinging on postembryonic growth capacity of the root meristem; this signaling pathway requires CRN and CLV2. The chain is CLAVATA3/ESR (CLE)-related protein 17 from Arabidopsis thaliana (Mouse-ear cress).